The sequence spans 416 residues: Choline/ethanolaminephosphotransferase 1 (416 aa).

Residues Met-1 to Val-20 are disordered. Ser-18 carries the post-translational modification Phosphoserine. Thr-40 bears the Phosphothreonine mark. Residue Asn-86 coordinates CDP-choline. The next 2 helical transmembrane spans lie at Thr-89–Pro-108 and Leu-116–Asp-133. Mg(2+) is bound at residue Asp-133. Asn-144 carries an N-linked (GlcNAc...) asparagine glycan. Glu-151 is a binding site for CDP-choline. Asp-154 contacts Mg(2+). The Proton acceptor role is filled by His-155. Transmembrane regions (helical) follow at residues Gly-156–Gly-176, Asp-180–Gln-199, Ile-210–Gly-230, Met-246–Arg-267, Val-286–Lys-306, His-315–Leu-334, Thr-349–Phe-363, and Asp-368–Cys-388. A Mg(2+)-binding site is contributed by Asp-158.

Belongs to the CDP-alcohol phosphatidyltransferase class-I family. In terms of assembly, homodimer. Mg(2+) is required as a cofactor. It depends on Mn(2+) as a cofactor. Ubiquitously expressed.

Its subcellular location is the endoplasmic reticulum membrane. The protein resides in the nucleus membrane. It carries out the reaction CDP-ethanolamine + a 1,2-diacyl-sn-glycerol = a 1,2-diacyl-sn-glycero-3-phosphoethanolamine + CMP + H(+). The enzyme catalyses CDP-choline + a 1,2-diacyl-sn-glycerol = a 1,2-diacyl-sn-glycero-3-phosphocholine + CMP + H(+). The catalysed reaction is 1-O-alkyl-2-acyl-sn-glycerol + CDP-choline = a 1-O-alkyl-2-acyl-sn-glycero-3-phosphocholine + CMP + H(+). It catalyses the reaction a 1-O-(1Z-alkenyl)-2-acyl-sn-glycerol + CDP-choline = a 1-O-(1Z-alkenyl)-2-acyl-sn-glycero-3-phosphocholine + CMP + H(+). It carries out the reaction 1,2-dioctanoyl-sn-glycerol + CDP-choline = 1,2-dioctanoyl-sn-glycero-3-phosphocholine + CMP + H(+). The enzyme catalyses 1,2-didecanoyl-sn-glycerol + CDP-choline = 1,2-didecanoyl-sn-glycero-3-phosphocholine + CMP + H(+). The catalysed reaction is CDP-choline + 1,2-di-(9Z-octadecenoyl)-sn-glycerol = 1,2-di-(9Z-octadecenoyl)-sn-glycero-3-phosphocholine + CMP + H(+). It catalyses the reaction 1-hexadecanoyl-2-(9Z-octadecenoyl)-sn-glycerol + CDP-choline = 1-hexadecanoyl-2-(9Z-octadecenoyl)-sn-glycero-3-phosphocholine + CMP + H(+). It carries out the reaction CDP-ethanolamine + 1,2-di-(9Z-octadecenoyl)-sn-glycerol = 1,2-di-(9Z-octadecenoyl)-sn-glycero-3-phosphoethanolamine + CMP + H(+). The enzyme catalyses 1-hexadecanoyl-2-(9Z-octadecenoyl)-sn-glycerol + CDP-ethanolamine = 1-hexadecanoyl-2-(9Z-octadecenoyl)-sn-glycero-3-phosphoethanolamine + CMP + H(+). The catalysed reaction is 1-hexadecanoyl-2-(4Z,7Z,10Z,13Z,16Z,19Z-docosahexaenoyl)-sn-glycerol + CDP-choline = 1-hexadecanoyl-2-(4Z,7Z,10Z,13Z,16Z,19Z-docosahexaenoyl)-sn-glycero-3-phosphocholine + CMP + H(+). It catalyses the reaction 1,2-di-(9Z-hexadecenoyl)-sn-glycerol + CDP-choline = 1,2-di-(9Z-hexadecenoyl)-sn-glycero-3-phosphocholine + CMP + H(+). It carries out the reaction 1,2-di-(9Z-hexadecenoyl)-sn-glycerol + CDP-ethanolamine = 1,2-di-(9Z-hexadecenoyl)-sn-glycero-3-phosphoethanolamine + CMP + H(+). The enzyme catalyses 1-O-hexadecyl-2-acetyl-sn-glycerol + CDP-choline = 1-O-hexadecyl-2-acetyl-sn-glycero-3-phosphocholine + CMP + H(+). The catalysed reaction is 1-O-hexadecyl-2-(5Z,8Z,11Z,14Z-eicosatetraenoyl)-sn-glycerol + CDP-choline = 1-O-hexadecyl-2-(5Z,8Z,11Z,14Z)-eicosatetraenoyl-sn-glycero-3-phosphocholine + CMP + H(+). It functions in the pathway phospholipid metabolism; phosphatidylethanolamine biosynthesis; phosphatidylethanolamine from ethanolamine: step 3/3. Its pathway is phospholipid metabolism; phosphatidylcholine biosynthesis; phosphatidylcholine from phosphocholine: step 2/2. Functionally, catalyzes both phosphatidylcholine and phosphatidylethanolamine biosynthesis from CDP-choline and CDP-ethanolamine, respectively. Involved in protein-dependent process of phospholipid transport to distribute phosphatidyl choline to the lumenal surface. Has a higher cholinephosphotransferase activity than ethanolaminephosphotransferase activity. The protein is Choline/ethanolaminephosphotransferase 1 of Homo sapiens (Human).